The following is a 454-amino-acid chain: Cobyrinate a,c-diamide synthase (454 aa).

The region spanning 247 to 442 is the GATase cobBQ-type domain; that stretch reads KIGIAMDSAF…IHAHWASNPN (196 aa). The active-site Nucleophile is the Cys-329.

This sequence belongs to the CobB/CbiA family. Requires Mg(2+) as cofactor.

It catalyses the reaction cob(II)yrinate + 2 L-glutamine + 2 ATP + 2 H2O = cob(II)yrinate a,c diamide + 2 L-glutamate + 2 ADP + 2 phosphate + 2 H(+). It participates in cofactor biosynthesis; adenosylcobalamin biosynthesis; cob(II)yrinate a,c-diamide from sirohydrochlorin (anaerobic route): step 10/10. Its function is as follows. Catalyzes the ATP-dependent amidation of the two carboxylate groups at positions a and c of cobyrinate, using either L-glutamine or ammonia as the nitrogen source. This chain is Cobyrinate a,c-diamide synthase, found in Leptospira interrogans serogroup Icterohaemorrhagiae serovar copenhageni (strain Fiocruz L1-130).